The sequence spans 227 residues: Uracil-DNA glycosylase (227 aa).

The Proton acceptor role is filled by Asp-64.

Belongs to the uracil-DNA glycosylase (UDG) superfamily. UNG family.

The protein localises to the cytoplasm. The enzyme catalyses Hydrolyzes single-stranded DNA or mismatched double-stranded DNA and polynucleotides, releasing free uracil.. Functionally, excises uracil residues from the DNA which can arise as a result of misincorporation of dUMP residues by DNA polymerase or due to deamination of cytosine. The polypeptide is Uracil-DNA glycosylase (Erwinia tasmaniensis (strain DSM 17950 / CFBP 7177 / CIP 109463 / NCPPB 4357 / Et1/99)).